The following is a 166-amino-acid chain: Small ribosomal subunit protein bS6 (166 aa).

Residues 97–166 form a disordered region; it reads EEGPSAMMRK…EEAETATDGE (70 aa). A compositionally biased stretch (basic and acidic residues) spans 105-159; it reads RKADRDRERDDRGGGFRGEREGGFRGDREGGFRGGDRDGGGFRGDRGPRRPREEA.

The protein belongs to the bacterial ribosomal protein bS6 family.

Binds together with bS18 to 16S ribosomal RNA. In Bradyrhizobium diazoefficiens (strain JCM 10833 / BCRC 13528 / IAM 13628 / NBRC 14792 / USDA 110), this protein is Small ribosomal subunit protein bS6.